Here is a 134-residue protein sequence, read N- to C-terminus: uncharacterized protein (134 aa).

3 helical membrane-spanning segments follow: residues 21-41, 52-72, and 95-115; these read FSTT…LYLI, LVLL…TPYE, and IVMA…VYII.

Its subcellular location is the host membrane. This is an uncharacterized protein from Acidianus two-tailed virus (ATV).